A 258-amino-acid polypeptide reads, in one-letter code: Ribosomal RNA large subunit methyltransferase E (258 aa).

5 residues coordinate S-adenosyl-L-methionine: Gly-58, Trp-60, Asp-78, Asp-96, and Asp-120. Lys-160 functions as the Proton acceptor in the catalytic mechanism.

The protein belongs to the class I-like SAM-binding methyltransferase superfamily. RNA methyltransferase RlmE family.

It is found in the cytoplasm. It catalyses the reaction uridine(2552) in 23S rRNA + S-adenosyl-L-methionine = 2'-O-methyluridine(2552) in 23S rRNA + S-adenosyl-L-homocysteine + H(+). Functionally, specifically methylates the uridine in position 2552 of 23S rRNA at the 2'-O position of the ribose in the fully assembled 50S ribosomal subunit. The polypeptide is Ribosomal RNA large subunit methyltransferase E (Methanococcus maripaludis (strain C7 / ATCC BAA-1331)).